A 223-amino-acid chain; its full sequence is Pleckstrin homology domain-containing family B member 1 (223 aa).

In terms of domain architecture, PH spans 2–109 (ALVRGGWLWR…WKTALMEANS (108 aa)).

In terms of assembly, homodimer. Interacts (via PH domain) with MYO1C. Interacts (via PH domain) with MYO7A. Binds transducins. As to expression, highly expressed in photoreceptor cells, oligodendrocytes and throughout the myelinated parts of the central nervous system. Detected in brain, liver, kidney, spleen and trachea.

The protein localises to the membrane. The protein resides in the cytoplasm. The sequence is that of Pleckstrin homology domain-containing family B member 1 (Plekhb1) from Rattus norvegicus (Rat).